The sequence spans 320 residues: o-succinylbenzoate synthase (320 aa).

K133 serves as the catalytic Proton donor. Positions 161, 190, and 213 each coordinate Mg(2+). K235 serves as the catalytic Proton acceptor.

Belongs to the mandelate racemase/muconate lactonizing enzyme family. MenC type 1 subfamily. It depends on a divalent metal cation as a cofactor.

The catalysed reaction is (1R,6R)-6-hydroxy-2-succinyl-cyclohexa-2,4-diene-1-carboxylate = 2-succinylbenzoate + H2O. It functions in the pathway quinol/quinone metabolism; 1,4-dihydroxy-2-naphthoate biosynthesis; 1,4-dihydroxy-2-naphthoate from chorismate: step 4/7. The protein operates within quinol/quinone metabolism; menaquinone biosynthesis. In terms of biological role, converts 2-succinyl-6-hydroxy-2,4-cyclohexadiene-1-carboxylate (SHCHC) to 2-succinylbenzoate (OSB). The protein is o-succinylbenzoate synthase of Salmonella dublin (strain CT_02021853).